The following is a 756-amino-acid chain: Serine/threonine-protein kinase DCLK2 (756 aa).

Residues 1 to 44 (MASTRSIELEHFEERDKRPRPGSRRGAPSSSGGSSISGPKGNGL) form a disordered region. The segment covering 7–19 (IELEHFEERDKRP) has biased composition (basic and acidic residues). Low complexity predominate over residues 24–43 (RRGAPSSSGGSSISGPKGNG). Phosphothreonine is present on Thr-61. Doublecortin domains follow at residues 72–158 (KKAR…VDYT) and 196–279 (KLVT…AQDD). Low complexity-rich tracts occupy residues 301–311 (KYSGSRSPGFS) and 323–346 (TPSS…SPGS). The disordered stretch occupies residues 301 to 375 (KYSGSRSPGF…GPELDRCLSP (75 aa)). The span at 353–364 (ISAQGRSSSNVN) shows a compositional bias: polar residues. Ser-361 carries the post-translational modification Phosphoserine. Positions 393 to 650 (YRIGKVIGDG…AGEILSHPWV (258 aa)) constitute a Protein kinase domain. Residues 399–407 (IGDGNFAVV) and Lys-422 each bind ATP. Asp-514 functions as the Proton acceptor in the catalytic mechanism. At Ser-646 the chain carries Phosphoserine. The residue at position 665 (Thr-665) is a Phosphothreonine. Residues 707 to 756 (QDSSRPSREQTSPVPPSAQEAPPPLESPRPPGPPATSGCDLAGTWRRHRD) are disordered. Over residues 719 to 740 (PVPPSAQEAPPPLESPRPPGPP) the composition is skewed to pro residues.

Belongs to the protein kinase superfamily. CAMK Ser/Thr protein kinase family. CaMK subfamily. In terms of assembly, binds to and stabilizes microtubules. Interacts with MAPK8IP1/JIP-1, MAPK8IP2/JIP-2, MAPK9/JNK2, PPP1R9B/NEURABIN-2 and actin. Autophosphorylated. Expressed in the central and peripheral nervous system including the brain, spinal cord, cranial and dorsal root ganglia and in the parasympathetic ganglia. Present in neurons, but not in glial cells, in most forebrain areas. Strong expression in the hippocampal CA1 pyramidal cell layer. Expressed in the photoreceptor sensory cilium complex and in eyes. Also detected in individual cells of the olfactory epithelium.

Its subcellular location is the cytoplasm. It localises to the cytoskeleton. It carries out the reaction L-seryl-[protein] + ATP = O-phospho-L-seryl-[protein] + ADP + H(+). The catalysed reaction is L-threonyl-[protein] + ATP = O-phospho-L-threonyl-[protein] + ADP + H(+). Protein kinase with a significantly reduced Ca(2+)+/CAM affinity and dependence compared to other members of the CaMK family. May play a role in the down-regulation of CRE-dependent gene activation probably by phosphorylation of the CREB coactivator CRTC2/TORC2 and the resulting retention of TORC2 in the cytoplasm. The protein is Serine/threonine-protein kinase DCLK2 (Dclk2) of Mus musculus (Mouse).